A 211-amino-acid chain; its full sequence is Putative 3-methyladenine DNA glycosylase (211 aa).

It belongs to the DNA glycosylase MPG family.

The protein is Putative 3-methyladenine DNA glycosylase of Granulibacter bethesdensis (strain ATCC BAA-1260 / CGDNIH1).